Reading from the N-terminus, the 741-residue chain is Copper-transporting ATPase (741 aa).

Positions methionine 1–lysine 67 constitute an HMA domain. The Cytoplasmic portion of the chain corresponds to methionine 1 to lysine 83. Residues cysteine 12 and cysteine 15 each contribute to the Cu cation site. A helical membrane pass occupies residues leucine 84 to serine 104. The Extracellular segment spans residues proline 105–alanine 124. A helical transmembrane segment spans residues cysteine 125–glutamine 144. At glycine 145–histidine 151 the chain is on the cytoplasmic side. The helical transmembrane segment at arginine 152–leucine 172 threads the bilayer. The Extracellular portion of the chain corresponds to tryptophan 173 to phenylalanine 190. A helical transmembrane segment spans residues glutamate 191–lysine 211. The Cytoplasmic segment spans residues aspartate 212 to lysine 339. Residues valine 340 to isoleucine 362 traverse the membrane as a helical segment. The Extracellular segment spans residues alanine 363–alanine 375. Residues leucine 376–leucine 393 form a helical membrane-spanning segment. Residues alanine 394–isoleucine 681 lie on the Cytoplasmic side of the membrane. Aspartate 431 (4-aspartylphosphate intermediate) is an active-site residue. Residues aspartate 627 and aspartate 631 each contribute to the Mg(2+) site. A helical transmembrane segment spans residues lysine 682–glycine 701. Residues valine 702–proline 712 lie on the Extracellular side of the membrane. The helical transmembrane segment at alanine 713–glutamine 731 threads the bilayer. Residues arginine 732–histidine 741 lie on the Cytoplasmic side of the membrane.

It belongs to the cation transport ATPase (P-type) (TC 3.A.3) family. Type IB subfamily.

The protein resides in the cell membrane. It catalyses the reaction Cu(2+)(in) + ATP + H2O = Cu(2+)(out) + ADP + phosphate + H(+). Probably involved in copper export. The protein is Copper-transporting ATPase (copA) of Helicobacter pylori (Campylobacter pylori).